Here is a 329-residue protein sequence, read N- to C-terminus: uncharacterized protein (329 aa).

The first 22 residues, 1-22 (MPLCNNFSGNLVVAVALFFAGA), serve as a signal peptide directing secretion.

This is an uncharacterized protein from Arabidopsis thaliana (Mouse-ear cress).